The chain runs to 205 residues: Spermatogenesis-associated protein 24 (205 aa).

A coiled-coil region spans residues 17–166 (LALDQLRDVI…QQKQIFRNHM (150 aa)). Residues 138-185 (EDILNGKENEIKELQQVISQQKQIFRNHMSDFRIQKQQESYMAQVLDQ) are required for interaction with CBX5 and TBPL1. Positions 180-205 (AQVLDQKHKKASGTRQARSHQHPREK) are disordered. Residues 186 to 205 (KHKKASGTRQARSHQHPREK) show a composition bias toward basic residues.

Belongs to the SPATA24 family. Homodimer. Interacts with CBX3, CBX5, GMNN, GTF2B, TBPL1 and the polycomb proteins PHCF2, RNF2 and SCMH1 but not with CBX1 or PCGF2.

The protein resides in the cytoplasm. The protein localises to the nucleus. It is found in the nucleolus. It localises to the nucleoplasm. Functionally, binds DNA with high affinity but does not bind to TATA boxes. Synergises with GMNN and TBP in activation of TATA box-containing promoters and with GMNN and TBPL1 in activation of the NF1 TATA-less promoter. May play a role in cytoplasm movement and removal during spermiogenesis. This is Spermatogenesis-associated protein 24 (SPATA24) from Homo sapiens (Human).